The following is a 391-amino-acid chain: 3-demethoxyubiquinol 3-hydroxylase (391 aa).

The protein belongs to the UbiH/COQ6 family. As to quaternary structure, component of the Ubi complex metabolon, which regroups five ubiquinone biosynthesis proteins (UbiE, UbiF, UbiG, UbiH and UbiI) and two accessory factors (UbiK and the lipid-binding protein UbiJ). FAD is required as a cofactor.

It localises to the cytoplasm. It carries out the reaction a 5-methoxy-2-methyl-3-(all-trans-polyprenyl)benzene-1,4-diol + AH2 + O2 = a 3-demethylubiquinol + A + H2O. It functions in the pathway cofactor biosynthesis; ubiquinone biosynthesis. Functionally, catalyzes the hydroxylation of 2-octaprenyl-3-methyl-6-methoxy-1,4-benzoquinol during ubiquinone biosynthesis. In Escherichia coli (strain K12), this protein is 3-demethoxyubiquinol 3-hydroxylase (ubiF).